A 178-amino-acid chain; its full sequence is Large ribosomal subunit protein uL6 (178 aa).

Belongs to the universal ribosomal protein uL6 family. As to quaternary structure, part of the 50S ribosomal subunit.

This protein binds to the 23S rRNA, and is important in its secondary structure. It is located near the subunit interface in the base of the L7/L12 stalk, and near the tRNA binding site of the peptidyltransferase center. This Ligilactobacillus salivarius (strain UCC118) (Lactobacillus salivarius) protein is Large ribosomal subunit protein uL6.